We begin with the raw amino-acid sequence, 451 residues long: DNA-directed RNA polymerase subunit Rpo1C (451 aa).

A unknown region spans residues 1–68 (MQDIIGKIED…DDDELLDAVE (68 aa)). A DNA-directed RNA polymerase subunit Rpo1C region spans residues 69 to 451 (DDYQRILKVQ…SVSVVMKERK (383 aa)).

It belongs to the RNA polymerase beta' chain family. Part of the RNA polymerase complex.

The protein localises to the cytoplasm. It catalyses the reaction RNA(n) + a ribonucleoside 5'-triphosphate = RNA(n+1) + diphosphate. Its function is as follows. DNA-dependent RNA polymerase (RNAP) catalyzes the transcription of DNA into RNA using the four ribonucleoside triphosphates as substrates. Forms part of the jaw domain. This Methanothermobacter thermautotrophicus (strain ATCC 29096 / DSM 1053 / JCM 10044 / NBRC 100330 / Delta H) (Methanobacterium thermoautotrophicum) protein is DNA-directed RNA polymerase subunit Rpo1C.